The primary structure comprises 852 residues: Sarcoplasmic reticulum histidine-rich calcium-binding protein (852 aa).

An N-terminal signal peptide occupies residues 1–27 (MGCRGPWLHTCLLWAAVASLLLPPAVT). A Pyrrolidone carboxylic acid modification is found at Q28. Positions 44–58 (AGAPGPSGEAAAAGL) are enriched in low complexity. Residues 44 to 770 (AGAPGPSGEA…EDTGPEDTQE (727 aa)) form a disordered region. A run of 2 repeats spans residues 59-79 (GHHG…SMEN) and 80-100 (GHHF…SREY). Residues 59–100 (GHHGHSHRSPGEENEDVSMENGHHFWSHRDHGETDDEVSREY) are 2 X approximate tandem repeats. Residues 79 to 101 (NGHHFWSHRDHGETDDEVSREYG) are compositionally biased toward basic and acidic residues. S120 bears the Phosphoserine mark. Over residues 146–157 (LAEHGSHGHGHE) the composition is skewed to basic and acidic residues. 12 stretches are compositionally biased toward acidic residues: residues 184 to 195 (EEGEEEEEEEEV), 208 to 217 (DEEDEDDDST), 233 to 246 (EEDE…GDST), 261 to 275 (EEED…GDST), 291 to 303 (EEDE…GDST), 319 to 332 (EEDD…GDST), 348 to 360 (EEDE…GDST), 376 to 388 (EEDE…GDST), 404 to 416 (EEDE…GDST), 432 to 444 (EEDE…GDST), 459 to 468 (EEEDEDDDDE), and 484 to 497 (EDDG…DDST). Tandem repeats lie at residues 199–224 (HRHR…RHQA), 225–253 (HRHR…HHQA), 254–282 (HRHR…RHQA), 283–310 (HRHR…RHQA), 311–339 (HRHR…RHQA), 340–367 (HRHR…RHQA), 368–395 (HRHR…RHQA), 396–423 (HRHR…HHQA), 424–451 (HRHR…RHQA), and 452–470 (HRHR…DEGE). A 10 X tandem repeats, acidic region spans residues 199 to 470 (HRHRGHGKED…EDEDDDDEGE (272 aa)). A 4 X approximate tandem repeats region spans residues 471-585 (HHHVPHRGHR…HHVASHPPPG (115 aa)). Positions 509–536 (HGKEEAEVTSDEHHHHVPDHGHQGHGDK) are enriched in basic and acidic residues. 3 positions are modified to phosphoserine: S518, S544, and S614. Basic and acidic residues-rich tracts occupy residues 587–619 (RSRE…ERGH), 630–646 (PPED…KEEV), and 658–681 (DGSR…HHSL). Residues 722–733 (EEEEEEEEEEEE) are compositionally biased toward acidic residues. Over residues 746–757 (SGREAAGGASSE) the composition is skewed to low complexity. Positions 758 to 769 (ESAEDTGPEDTQ) are enriched in acidic residues. The tract at residues 780-826 (CGYCTFCNRCTECEHCHCDEDSMGEHCDQCQHCQFCYLCPLVCETVC) is metal-binding.

This sequence belongs to the HRC family. The N-terminus is blocked.

It localises to the sarcoplasmic reticulum lumen. Its function is as follows. May play a role in the regulation of calcium sequestration or release in the SR of skeletal and cardiac muscle. This Oryctolagus cuniculus (Rabbit) protein is Sarcoplasmic reticulum histidine-rich calcium-binding protein (HRC).